Reading from the N-terminus, the 253-residue chain is Phycoerythrobilin:ferredoxin oxidoreductase (253 aa).

Belongs to the HY2 family.

It catalyses the reaction (3Z)-phycoerythrobilin + oxidized 2[4Fe-4S]-[ferredoxin] = 15,16-dihydrobiliverdin + reduced 2[4Fe-4S]-[ferredoxin] + 2 H(+). Catalyzes the two-electron reduction of the C2 and C3(1) diene system of 15,16-dihydrobiliverdin. This Prochlorococcus marinus (strain AS9601) protein is Phycoerythrobilin:ferredoxin oxidoreductase.